The sequence spans 184 residues: Ribosome-recycling factor (184 aa).

The protein belongs to the RRF family.

Its subcellular location is the cytoplasm. Functionally, responsible for the release of ribosomes from messenger RNA at the termination of protein biosynthesis. May increase the efficiency of translation by recycling ribosomes from one round of translation to another. The protein is Ribosome-recycling factor of Borreliella afzelii (strain PKo) (Borrelia afzelii).